The primary structure comprises 365 residues: Glycosyltransferase 8 domain-containing protein 1 (365 aa).

The Cytoplasmic portion of the chain corresponds to 1 to 4 (MTVR). The helical; Signal-anchor for type II membrane protein transmembrane segment at 5-22 (RVNVVILVLLVVAFLIVL) threads the bilayer. Topologically, residues 23-365 (HRNLLNLNDF…HPIRKHVEEK (343 aa)) are lumenal. 4 N-linked (GlcNAc...) asparagine glycosylation sites follow: Asn-102, Asn-181, Asn-245, and Asn-253.

The protein belongs to the glycosyltransferase 8 family.

It is found in the membrane. The chain is Glycosyltransferase 8 domain-containing protein 1 (glt8d1) from Danio rerio (Zebrafish).